A 367-amino-acid polypeptide reads, in one-letter code: MTKVLLSHPPRPASHNSSRAMVWVRKNLFSSWSNSLLTIGCIWLMWELIPPLLNWAFLQANWVGSTRADCTKAGACWVFIHERFGQFMYGLYPHDQRWRINLALLIGLVSIAPMFWKILPHRGRYIAAWAVIYPLIVWWLMYGGFFALERVETRQWGGLTLTLIIASVGIAGALPWGILLALGRRSHMPIVRILSVIFIEFWRGVPLITVLFMSSVMLPLFMAEGTSIDKLIRALVGVILFQSAYVAEVVRGGLQALPKGQYEAAESLALGYWKTQGLVILPQALKLVIPGLVNTIIALFKDTSLVIIIGLFDLFSSVQQATVDPAWLGMSTEGYVFAALIYWIFCFSMSRYSQYLEKRFNTGRTPH.

Residues 1-36 (MTKVLLSHPPRPASHNSSRAMVWVRKNLFSSWSNSL) are Cytoplasmic-facing. A helical membrane pass occupies residues 37 to 57 (LTIGCIWLMWELIPPLLNWAF). Residues 58-99 (LQANWVGSTRADCTKAGACWVFIHERFGQFMYGLYPHDQRWR) are Periplasmic-facing. A helical membrane pass occupies residues 100–120 (INLALLIGLVSIAPMFWKILP). At 121–125 (HRGRY) the chain is on the cytoplasmic side. Residues 126-146 (IAAWAVIYPLIVWWLMYGGFF) form a helical membrane-spanning segment. The Periplasmic segment spans residues 147–162 (ALERVETRQWGGLTLT). The ABC transmembrane type-1 domain occupies 159 to 353 (LTLTLIIASV…IFCFSMSRYS (195 aa)). The helical transmembrane segment at 163–183 (LIIASVGIAGALPWGILLALG) threads the bilayer. Topologically, residues 184-192 (RRSHMPIVR) are cytoplasmic. The helical transmembrane segment at 193–213 (ILSVIFIEFWRGVPLITVLFM) threads the bilayer. Residues 214–233 (SSVMLPLFMAEGTSIDKLIR) lie on the Periplasmic side of the membrane. A helical membrane pass occupies residues 234–254 (ALVGVILFQSAYVAEVVRGGL). Residues 255–291 (QALPKGQYEAAESLALGYWKTQGLVILPQALKLVIPG) lie on the Cytoplasmic side of the membrane. Residues 292–312 (LVNTIIALFKDTSLVIIIGLF) traverse the membrane as a helical segment. Residues 313–326 (DLFSSVQQATVDPA) are Periplasmic-facing. The chain crosses the membrane as a helical span at residues 327–347 (WLGMSTEGYVFAALIYWIFCF). Topologically, residues 348–367 (SMSRYSQYLEKRFNTGRTPH) are cytoplasmic.

Belongs to the binding-protein-dependent transport system permease family. HisMQ subfamily.

It localises to the cell inner membrane. Its function is as follows. Probably part of the binding-protein-dependent transport system YdhWXYZ for an amino acid; probably responsible for the translocation of the substrate across the membrane. This chain is Inner membrane amino-acid ABC transporter permease protein YhdY (yhdY), found in Escherichia coli (strain K12).